Reading from the N-terminus, the 943-residue chain is Isoleucine--tRNA ligase 1 (943 aa).

The short motif at 58-68 (PYANGTIHIGH) is the 'HIGH' region element. L-isoleucyl-5'-AMP is bound at residue E567. The short motif at 608-612 (KMSKS) is the 'KMSKS' region element. K611 is an ATP binding site. Zn(2+) is bound by residues C906, C909, C926, and C929.

Belongs to the class-I aminoacyl-tRNA synthetase family. IleS type 1 subfamily. In terms of assembly, monomer. Zn(2+) serves as cofactor.

It is found in the cytoplasm. The catalysed reaction is tRNA(Ile) + L-isoleucine + ATP = L-isoleucyl-tRNA(Ile) + AMP + diphosphate. Functionally, catalyzes the attachment of isoleucine to tRNA(Ile). As IleRS can inadvertently accommodate and process structurally similar amino acids such as valine, to avoid such errors it has two additional distinct tRNA(Ile)-dependent editing activities. One activity is designated as 'pretransfer' editing and involves the hydrolysis of activated Val-AMP. The other activity is designated 'posttransfer' editing and involves deacylation of mischarged Val-tRNA(Ile). In terms of biological role, confers resistance to the antibiotic mupirocin (pseudomonic acid A), an Ile-analog produced by P.fluorescens NCIMB 10586 itself that competitively inhibits activation by Ile-tRNA synthetase, thus inhibiting protein biosynthesis. This chain is Isoleucine--tRNA ligase 1 (ileS1), found in Pseudomonas fluorescens.